Here is a 466-residue protein sequence, read N- to C-terminus: Signal recognition particle 54 kDa protein (466 aa).

GTP-binding positions include 104–111, 184–188, and 242–245; these read GLQGSGKT, DTAGR, and TKLD. The segment at 444 to 466 is disordered; it reads MQQGGGGGGGGGGGLGGMGPFGD. A compositionally biased stretch (gly residues) spans 446–466; sequence QGGGGGGGGGGGLGGMGPFGD.

It belongs to the GTP-binding SRP family. SRP54 subfamily. Part of the signal recognition particle protein translocation system, which is composed of SRP and FtsY. Archaeal SRP consists of a 7S RNA molecule of 300 nucleotides and two protein subunits: SRP54 and SRP19.

Its subcellular location is the cytoplasm. It catalyses the reaction GTP + H2O = GDP + phosphate + H(+). In terms of biological role, involved in targeting and insertion of nascent membrane proteins into the cytoplasmic membrane. Binds to the hydrophobic signal sequence of the ribosome-nascent chain (RNC) as it emerges from the ribosomes. The SRP-RNC complex is then targeted to the cytoplasmic membrane where it interacts with the SRP receptor FtsY. In Natronomonas pharaonis (strain ATCC 35678 / DSM 2160 / CIP 103997 / JCM 8858 / NBRC 14720 / NCIMB 2260 / Gabara) (Halobacterium pharaonis), this protein is Signal recognition particle 54 kDa protein.